Reading from the N-terminus, the 255-residue chain is Venom allergen-1 (255 aa).

The first 21 residues, 1–21 (MASHVIVKFITAAILIGSCYA), serve as a signal peptide directing secretion. In terms of domain architecture, SCP spans 65 to 210 (LKKHNELRAE…VIKYYLVCNY (146 aa)). 2 N-linked (GlcNAc...) asparagine glycosylation sites follow: Asn146 and Asn209.

This sequence belongs to the CRISP family. In terms of assembly, interacts with human LRPPRC; the interaction interrupts association between BECN1 and LRPPRC. Interacts with human CD4. (Microbial infection) Interacts with Zika virus envelope protein E and Zika virus-like particles; the interaction does not affect Zika virus replication in human endothelial cells and keratinocytes. In terms of tissue distribution, saliva (at protein level). Female salivary gland. No or low-level expression in female hemolymph, midgut, Malpighian tubule system and ovary. No or low-level expression in male tissues.

Its subcellular location is the secreted. It is found in the host endosome. The protein resides in the host mitochondrion. Activates autophagy in human monocytic cells, dendritic cells and macrophages. Promotes activation of human CD4(+) T-cells. Does not affect cytokine expression in human monocytic cells. Its function is as follows. (Microbial infection) Promotes dengue virus type 2 replication in human monocytic cells, dendritic cells and macrophages. Pro-viral properties are linked to BECN1-mediated autophagy activation in the host. Does not directly interact with the purified envelope protein of dengue virus type 2. In terms of biological role, (Microbial infection) Promotes Zika virus replication in human monocytic cells, dendritic cells and macrophages. Facilitates Zika virus transmission from infected mosquitoes to the host in mouse model. Pro-viral properties are linked to BECN1-mediated autophagy activation in the host. Does not affect Zika virus replication in human endothelial cells and keratinocytes. Functionally, (Microbial infection) Promotes Semliki Forest virus replication in human monocytic cells. (Microbial infection) Does not influence Batai virus replication in human monocytic cells. This Aedes aegypti (Yellowfever mosquito) protein is Venom allergen-1.